We begin with the raw amino-acid sequence, 388 residues long: Ferrochelatase (388 aa).

Fe cation-binding residues include histidine 197 and glutamate 278.

The protein belongs to the ferrochelatase family.

It localises to the cytoplasm. The enzyme catalyses heme b + 2 H(+) = protoporphyrin IX + Fe(2+). Its pathway is porphyrin-containing compound metabolism; protoheme biosynthesis; protoheme from protoporphyrin-IX: step 1/1. Its function is as follows. Catalyzes the ferrous insertion into protoporphyrin IX. The sequence is that of Ferrochelatase from Thermosynechococcus vestitus (strain NIES-2133 / IAM M-273 / BP-1).